A 422-amino-acid chain; its full sequence is UDP-N-acetylglucosamine 1-carboxyvinyltransferase (422 aa).

22–23 (KN) lines the phosphoenolpyruvate pocket. Arg94 is a binding site for UDP-N-acetyl-alpha-D-glucosamine. Cys118 serves as the catalytic Proton donor. A 2-(S-cysteinyl)pyruvic acid O-phosphothioketal modification is found at Cys118. UDP-N-acetyl-alpha-D-glucosamine is bound by residues 123–127 (RPVDL), Asp309, and Ile331.

The protein belongs to the EPSP synthase family. MurA subfamily.

The protein localises to the cytoplasm. The enzyme catalyses phosphoenolpyruvate + UDP-N-acetyl-alpha-D-glucosamine = UDP-N-acetyl-3-O-(1-carboxyvinyl)-alpha-D-glucosamine + phosphate. It participates in cell wall biogenesis; peptidoglycan biosynthesis. Its function is as follows. Cell wall formation. Adds enolpyruvyl to UDP-N-acetylglucosamine. The protein is UDP-N-acetylglucosamine 1-carboxyvinyltransferase of Cereibacter sphaeroides (strain ATCC 17023 / DSM 158 / JCM 6121 / CCUG 31486 / LMG 2827 / NBRC 12203 / NCIMB 8253 / ATH 2.4.1.) (Rhodobacter sphaeroides).